A 252-amino-acid chain; its full sequence is Large ribosomal subunit protein uL10m (252 aa).

Residues 1–24 (MAATLCCRLLPKAGWVPLTQSVRH) constitute a mitochondrion transit peptide.

This sequence belongs to the universal ribosomal protein uL10 family. In terms of assembly, component of the mitochondrial ribosome large subunit (39S) which comprises a 16S rRNA and about 50 distinct proteins.

It is found in the mitochondrion. The protein is Large ribosomal subunit protein uL10m (mrpl10) of Danio rerio (Zebrafish).